Reading from the N-terminus, the 224-residue chain is Glycerol-3-phosphate acyltransferase (224 aa).

The next 5 membrane-spanning stretches (helical) occupy residues 14 to 34 (FFPLAATLLGYLIGSLSFAVI), 64 to 84 (TAAIVTLLLDAAKGWLPVMLV), 98 to 118 (MALVGLAAFIGHLYPVFFNFA), 127 to 147 (LGVLLGLSPILALATGATWLI), and 160 to 180 (LTAAVFVPVYYVFGDGMAWYL).

This sequence belongs to the PlsY family. As to quaternary structure, probably interacts with PlsX.

The protein localises to the cell inner membrane. It carries out the reaction an acyl phosphate + sn-glycerol 3-phosphate = a 1-acyl-sn-glycero-3-phosphate + phosphate. It functions in the pathway lipid metabolism; phospholipid metabolism. Its function is as follows. Catalyzes the transfer of an acyl group from acyl-phosphate (acyl-PO(4)) to glycerol-3-phosphate (G3P) to form lysophosphatidic acid (LPA). This enzyme utilizes acyl-phosphate as fatty acyl donor, but not acyl-CoA or acyl-ACP. The chain is Glycerol-3-phosphate acyltransferase from Albidiferax ferrireducens (strain ATCC BAA-621 / DSM 15236 / T118) (Rhodoferax ferrireducens).